Consider the following 335-residue polypeptide: Probable peroxidase 26 (335 aa).

Residues 1 to 18 form the signal peptide; it reads MVMIHIFLTVMVVGGVSL. Cystine bridges form between Cys46/Cys122, Cys79/Cys84, Cys128/Cys331, and Cys205/Cys237. Residue Arg73 is part of the active site. Residues Asp78, Val81, Gly83, Asp85, and Ser87 each coordinate Ca(2+). Substrate is bound at residue Pro168. His198 is a heme b binding site. Residue Ser199 coordinates Ca(2+). A glycan (N-linked (GlcNAc...) asparagine) is linked at Asn216. Residues Asp255 and Ser258 each coordinate Ca(2+). Asn259 and Asn273 each carry an N-linked (GlcNAc...) asparagine glycan.

The protein belongs to the peroxidase family. Classical plant (class III) peroxidase subfamily. It depends on heme b as a cofactor. Requires Ca(2+) as cofactor.

Its subcellular location is the secreted. The catalysed reaction is 2 a phenolic donor + H2O2 = 2 a phenolic radical donor + 2 H2O. Removal of H(2)O(2), oxidation of toxic reductants, biosynthesis and degradation of lignin, suberization, auxin catabolism, response to environmental stresses such as wounding, pathogen attack and oxidative stress. The enzyme activity has to be proved. The sequence is that of Probable peroxidase 26 (PER26) from Arabidopsis thaliana (Mouse-ear cress).